The following is a 153-amino-acid chain: Mitochondrial fission 1 protein (153 aa).

Over 1–124 (MTQLPYAVDA…LIDDKVTKEG (124 aa)) the chain is Cytoplasmic. A TPR repeat occupies 73 to 106 (RECLYYLALGNYKLGNYAQARKYNDALLENEPAN). Residues 125–145 (LMGVAIISGVAVAAGVIGGVL) form a helical membrane-spanning segment. The Mitochondrial intermembrane portion of the chain corresponds to 146–153 (LRNLGRKR).

It belongs to the FIS1 family.

The protein localises to the mitochondrion outer membrane. In terms of biological role, has a role in mitochondrial fission. Has a role in outer membrane fission but not matrix separation. In Neurospora crassa (strain ATCC 24698 / 74-OR23-1A / CBS 708.71 / DSM 1257 / FGSC 987), this protein is Mitochondrial fission 1 protein (mtp-2).